The sequence spans 459 residues: Sensor histidine kinase SpaK (459 aa).

At 1–18 the chain is on the cytoplasmic side; the sequence is MGIGFKGRKTLLRELVKY. A helical transmembrane segment spans residues 19 to 39; sequence MVTLCISLVVLALLYIFINTI. Topologically, residues 40–155 are extracellular; it reads AMNTGFSHPA…RKYLPNYELT (116 aa). A helical transmembrane segment spans residues 156 to 176; sequence SICILIILLIIVISIITTYFA. Residues 177 to 459 lie on the Cytoplasmic side of the membrane; that stretch reads NRLRKHFETL…VRVKIPLRNE (283 aa). The 215-residue stretch at 244 to 458 folds into the Histidine kinase domain; it reads ALAHEIKIPI…EVRVKIPLRN (215 aa). Histidine 247 is subject to Phosphohistidine; by autocatalysis.

It localises to the cell membrane. It carries out the reaction ATP + protein L-histidine = ADP + protein N-phospho-L-histidine.. Functionally, member of the two-component regulatory system SpaK/SpaR involved in the regulation of the biosynthesis of lantibiotic subtilin. SpaK may function as a membrane-associated protein kinase that phosphorylates SpaR in response to environmental signals. The chain is Sensor histidine kinase SpaK (spaK) from Bacillus subtilis.